Consider the following 114-residue polypeptide: Iron-sulfur cluster insertion protein ErpA (114 aa).

Iron-sulfur cluster contacts are provided by C42, C106, and C108.

The protein belongs to the HesB/IscA family. In terms of assembly, homodimer. The cofactor is iron-sulfur cluster.

Functionally, required for insertion of 4Fe-4S clusters for at least IspG. The chain is Iron-sulfur cluster insertion protein ErpA from Shigella boydii serotype 18 (strain CDC 3083-94 / BS512).